The primary structure comprises 456 residues: Bifunctional protein GlmU (456 aa).

Positions methionine 1–arginine 229 are pyrophosphorylase. Residues leucine 8–glycine 11, lysine 22, glutamine 73, and glycine 78–threonine 79 each bind UDP-N-acetyl-alpha-D-glucosamine. Aspartate 103 contacts Mg(2+). Residues glycine 140, glutamate 155, asparagine 170, and asparagine 227 each coordinate UDP-N-acetyl-alpha-D-glucosamine. Asparagine 227 contributes to the Mg(2+) binding site. Residues leucine 230–asparagine 250 form a linker region. The interval glycine 251–lysine 456 is N-acetyltransferase. UDP-N-acetyl-alpha-D-glucosamine contacts are provided by arginine 332 and lysine 350. The Proton acceptor role is filled by histidine 362. Positions 365 and 376 each coordinate UDP-N-acetyl-alpha-D-glucosamine. Acetyl-CoA-binding positions include asparagine 385–tyrosine 386, alanine 422, and arginine 439.

It in the N-terminal section; belongs to the N-acetylglucosamine-1-phosphate uridyltransferase family. This sequence in the C-terminal section; belongs to the transferase hexapeptide repeat family. In terms of assembly, homotrimer. Requires Mg(2+) as cofactor.

It is found in the cytoplasm. It catalyses the reaction alpha-D-glucosamine 1-phosphate + acetyl-CoA = N-acetyl-alpha-D-glucosamine 1-phosphate + CoA + H(+). The enzyme catalyses N-acetyl-alpha-D-glucosamine 1-phosphate + UTP + H(+) = UDP-N-acetyl-alpha-D-glucosamine + diphosphate. Its pathway is nucleotide-sugar biosynthesis; UDP-N-acetyl-alpha-D-glucosamine biosynthesis; N-acetyl-alpha-D-glucosamine 1-phosphate from alpha-D-glucosamine 6-phosphate (route II): step 2/2. It participates in nucleotide-sugar biosynthesis; UDP-N-acetyl-alpha-D-glucosamine biosynthesis; UDP-N-acetyl-alpha-D-glucosamine from N-acetyl-alpha-D-glucosamine 1-phosphate: step 1/1. The protein operates within bacterial outer membrane biogenesis; LPS lipid A biosynthesis. In terms of biological role, catalyzes the last two sequential reactions in the de novo biosynthetic pathway for UDP-N-acetylglucosamine (UDP-GlcNAc). The C-terminal domain catalyzes the transfer of acetyl group from acetyl coenzyme A to glucosamine-1-phosphate (GlcN-1-P) to produce N-acetylglucosamine-1-phosphate (GlcNAc-1-P), which is converted into UDP-GlcNAc by the transfer of uridine 5-monophosphate (from uridine 5-triphosphate), a reaction catalyzed by the N-terminal domain. This Clostridium acetobutylicum (strain ATCC 824 / DSM 792 / JCM 1419 / IAM 19013 / LMG 5710 / NBRC 13948 / NRRL B-527 / VKM B-1787 / 2291 / W) protein is Bifunctional protein GlmU.